The following is a 545-amino-acid chain: CTP synthase (545 aa).

Residues 1–266 (MTTRYIFVTG…DELVIKRFNI (266 aa)) are amidoligase domain. CTP is bound at residue Ser-14. Residue Ser-14 participates in UTP binding. ATP is bound by residues 15-20 (SLGKGI) and Asp-72. Residues Asp-72 and Glu-140 each contribute to the Mg(2+) site. CTP is bound by residues 147 to 149 (DIE), 187 to 192 (KTKPTQ), and Lys-223. Residues 187-192 (KTKPTQ) and Lys-223 each bind UTP. 239 to 241 (KDV) is an ATP binding site. The Glutamine amidotransferase type-1 domain maps to 291 to 542 (TIGMVGKYIE…IAASLSHQKR (252 aa)). L-glutamine is bound at residue Gly-352. The active-site Nucleophile; for glutamine hydrolysis is Cys-379. Residues 380–383 (LGMQ), Glu-403, and Arg-470 each bind L-glutamine. Active-site residues include His-515 and Glu-517.

Belongs to the CTP synthase family. Homotetramer.

The catalysed reaction is UTP + L-glutamine + ATP + H2O = CTP + L-glutamate + ADP + phosphate + 2 H(+). It catalyses the reaction L-glutamine + H2O = L-glutamate + NH4(+). The enzyme catalyses UTP + NH4(+) + ATP = CTP + ADP + phosphate + 2 H(+). The protein operates within pyrimidine metabolism; CTP biosynthesis via de novo pathway; CTP from UDP: step 2/2. Allosterically activated by GTP, when glutamine is the substrate; GTP has no effect on the reaction when ammonia is the substrate. The allosteric effector GTP functions by stabilizing the protein conformation that binds the tetrahedral intermediate(s) formed during glutamine hydrolysis. Inhibited by the product CTP, via allosteric rather than competitive inhibition. Functionally, catalyzes the ATP-dependent amination of UTP to CTP with either L-glutamine or ammonia as the source of nitrogen. Regulates intracellular CTP levels through interactions with the four ribonucleotide triphosphates. This Shewanella denitrificans (strain OS217 / ATCC BAA-1090 / DSM 15013) protein is CTP synthase.